Here is a 434-residue protein sequence, read N- to C-terminus: Enolase (434 aa).

Gln-165 contributes to the (2R)-2-phosphoglycerate binding site. Glu-207 acts as the Proton donor in catalysis. Residues Asp-244, Glu-291, and Asp-318 each contribute to the Mg(2+) site. Positions 343, 372, 373, and 394 each coordinate (2R)-2-phosphoglycerate. Lys-343 (proton acceptor) is an active-site residue.

Belongs to the enolase family. Mg(2+) serves as cofactor.

The protein localises to the cytoplasm. It localises to the secreted. It is found in the cell surface. It carries out the reaction (2R)-2-phosphoglycerate = phosphoenolpyruvate + H2O. It functions in the pathway carbohydrate degradation; glycolysis; pyruvate from D-glyceraldehyde 3-phosphate: step 4/5. Catalyzes the reversible conversion of 2-phosphoglycerate (2-PG) into phosphoenolpyruvate (PEP). It is essential for the degradation of carbohydrates via glycolysis. The polypeptide is Enolase (Staphylococcus epidermidis (strain ATCC 35984 / DSM 28319 / BCRC 17069 / CCUG 31568 / BM 3577 / RP62A)).